A 195-amino-acid polypeptide reads, in one-letter code: Proteasome subunit beta 1 (195 aa).

The propeptide at 1-6 (MEELPA) is removed in mature form; by autocatalysis. Catalysis depends on Thr-7, which acts as the Nucleophile.

Belongs to the peptidase T1B family. The 20S proteasome core is composed of 14 alpha and 14 beta subunits that assemble into four stacked heptameric rings, resulting in a barrel-shaped structure. The two inner rings, each composed of seven catalytic beta subunits, are sandwiched by two outer rings, each composed of seven alpha subunits. The catalytic chamber with the active sites is on the inside of the barrel. Has a gated structure, the ends of the cylinder being occluded by the N-termini of the alpha-subunits. Is capped at one or both ends by the proteasome regulatory ATPase, PAN.

It localises to the cytoplasm. The catalysed reaction is Cleavage of peptide bonds with very broad specificity.. With respect to regulation, the formation of the proteasomal ATPase PAN-20S proteasome complex, via the docking of the C-termini of PAN into the intersubunit pockets in the alpha-rings, triggers opening of the gate for substrate entry. Interconversion between the open-gate and close-gate conformations leads to a dynamic regulation of the 20S proteasome proteolysis activity. Its function is as follows. Component of the proteasome core, a large protease complex with broad specificity involved in protein degradation. This is Proteasome subunit beta 1 from Sulfolobus acidocaldarius (strain ATCC 33909 / DSM 639 / JCM 8929 / NBRC 15157 / NCIMB 11770).